The following is a 443-amino-acid chain: Thymidine phosphorylase (443 aa).

This sequence belongs to the thymidine/pyrimidine-nucleoside phosphorylase family. As to quaternary structure, homodimer.

It carries out the reaction thymidine + phosphate = 2-deoxy-alpha-D-ribose 1-phosphate + thymine. Its pathway is pyrimidine metabolism; dTMP biosynthesis via salvage pathway; dTMP from thymine: step 1/2. In terms of biological role, the enzymes which catalyze the reversible phosphorolysis of pyrimidine nucleosides are involved in the degradation of these compounds and in their utilization as carbon and energy sources, or in the rescue of pyrimidine bases for nucleotide synthesis. The protein is Thymidine phosphorylase of Shewanella baltica (strain OS195).